The chain runs to 252 residues: MQIVVATHNEGKLVEIRRILEEDLGVDAENIELVSAGSLHLPDPVETGVTFQENALLKARAVAIRTGLPAVADDSGLIVDVMGNAPGILSARWAGAHGHDKANNALLLAQIGDIPDDKRTARFRCAAALVVPDTEAGADVTGGVAADGITVHTTAADGSTAPVHARYAIKSETVELGDMPGRIIREARGEHGFGYDPLFVPDDQPAGRVSTEPDHEGEPLTSAEMTSAEKNAISHRGKALKALVPAIEALLH.

7–12 (THNEGK) provides a ligand contact to substrate. Aspartate 74 functions as the Proton acceptor in the catalytic mechanism. Residue aspartate 74 coordinates Mg(2+). Residues serine 75 and 193-196 (FGYD) contribute to the substrate site. A disordered region spans residues 201 to 224 (PDDQPAGRVSTEPDHEGEPLTSAE). Substrate-binding positions include lysine 230 and 235–236 (HR).

Belongs to the HAM1 NTPase family. Homodimer. Mg(2+) is required as a cofactor.

It carries out the reaction XTP + H2O = XMP + diphosphate + H(+). It catalyses the reaction dITP + H2O = dIMP + diphosphate + H(+). The catalysed reaction is ITP + H2O = IMP + diphosphate + H(+). Functionally, pyrophosphatase that catalyzes the hydrolysis of nucleoside triphosphates to their monophosphate derivatives, with a high preference for the non-canonical purine nucleotides XTP (xanthosine triphosphate), dITP (deoxyinosine triphosphate) and ITP. Seems to function as a house-cleaning enzyme that removes non-canonical purine nucleotides from the nucleotide pool, thus preventing their incorporation into DNA/RNA and avoiding chromosomal lesions. This chain is dITP/XTP pyrophosphatase, found in Bifidobacterium longum subsp. infantis (strain ATCC 15697 / DSM 20088 / JCM 1222 / NCTC 11817 / S12).